A 395-amino-acid chain; its full sequence is Nickel and cobalt resistance protein CnrB (395 aa).

Residues 13–33 (MIAGVAAVAAAVGFGAAHLPV) form a helical membrane-spanning segment. The segment at 35–55 (EKSPASTQAPEAQKPQSAPVK) is disordered. The segment covering 37–50 (SPASTQAPEAQKPQ) has biased composition (polar residues). A coiled-coil region spans residues 140-193 (AAERKVAQAKADLARKTYEREASLFQQGVTPRQEMEAAKAALDVAQAEALRAAT).

It belongs to the membrane fusion protein (MFP) (TC 8.A.1) family.

It is found in the cell inner membrane. The products of the genes cnrA, cnrB, and cnrC are likely to form a membrane-bound protein complex catalyzing an energy-dependent efflux of Ni(2+) and Co(2+). The mechanism of action of the CnrCBA complex may be that of a proton/cation antiporter. The chain is Nickel and cobalt resistance protein CnrB (cnrB) from Cupriavidus metallidurans (strain ATCC 43123 / DSM 2839 / NBRC 102507 / CH34) (Ralstonia metallidurans).